The sequence spans 615 residues: MGDWMTVTDPVLCTENKNLSQYTSETKMSPSSLYSQQVLCSSVPLSKNVHGVFGVFCTGENIEQSISYLDQELTTFGFPSLYEESKSKEAKRELNIVAVLNCMNELLVLQRKNLLAQESVETQNLKLGSDMDHLQSCYAKLKEQLETSRREMIGLQERDRQLQCKNRSLHQLLKNEKDEVQKLQNIIASRATQYNHDVKRKEREYNKLKERLHQLVMNKKDKNIAMDVLNYVGRADGKRGSWRTDKTEARNEDEMYKILLNDYEYRQKQILMENAELKKVLQQMKKEMISLLSPQKKKPRERAEDGTGTVAISDIEDDSGELSRDSVWGLSCDTVREQLTNSIRKQWRILKSHVEKLDNQASKVHSEGLNEEDVISRQDHEQETEKLELEIERCKEMIKAQQQLLQQQLATTCDDDTTSLLRDCYLLEEKERLKEEWTLFKEQKKNFERERRSFTEAAIRLGLERKAFEEERASWVKQQFLNMTNFDHQNSENVKLFSAFSGSSDPDNLIVHSRPRQKKLHSVANGVPACTSKLTKSLPASPSTSDFRQTHSCVSEHSSISVLNITPEESKPSEVARESTDQKWSVQSRPSSREGCYSGCSSAFRSAHGDRDDLP.

Coiled-coil stretches lie at residues 126–227 (KLGS…IAMD) and 266–293 (RQKQ…SLLS). Ser-290, Ser-293, Ser-313, and Ser-319 each carry phosphoserine. The tract at residues 293 to 316 (SPQKKKPRERAEDGTGTVAISDIE) is disordered. Residues 375–461 (ISRQDHEQET…RSFTEAAIRL (87 aa)) are a coiled coil. 3 positions are modified to phosphoserine: Ser-537, Ser-541, and Ser-543. The interval 567–615 (PEESKPSEVARESTDQKWSVQSRPSSREGCYSGCSSAFRSAHGDRDDLP) is disordered. Basic and acidic residues predominate over residues 568-581 (EESKPSEVARESTD).

It belongs to the ADIP family. Interacts with SSX2 and SSX3. Does not interact with SSX1 and SSX4. Interacts with afadin and alpha-actinin. Interacts with VAV2. Interacts with PCM1. Interacts with WRAP73. As to expression, widely expressed.

The protein resides in the cell junction. Its subcellular location is the adherens junction. The protein localises to the nucleus. It localises to the cytoplasm. It is found in the cytoskeleton. The protein resides in the microtubule organizing center. Its subcellular location is the centrosome. The protein localises to the centriolar satellite. It localises to the cilium basal body. Its function is as follows. Belongs to an adhesion system, which plays a role in the organization of homotypic, interneuronal and heterotypic cell-cell adherens junctions (AJs). May connect the nectin-afadin and E-cadherin-catenin system through alpha-actinin and may be involved in organization of the actin cytoskeleton at AJs through afadin and alpha-actinin. Acts as a centrosome maturation factor, probably by maintaining the integrity of the pericentriolar material and proper microtubule nucleation at mitotic spindle poles. The function seems to implicate at least in part WRAP73; the SSX2IP:WRAP73 complex is proposed to act as regulator of spindle anchoring at the mitotic centrosome. Involved in cell movement: localizes at the leading edge of moving cells in response to PDGF and is required for the formation of the leading edge and the promotion of cell movement, possibly via activation of Rac signaling. Involved in ciliogenesis. It is required for targeted recruitment of the BBSome, CEP290, RAB8, and SSTR3 to the cilia. The protein is Afadin- and alpha-actinin-binding protein (Ssx2ip) of Mus musculus (Mouse).